Here is a 415-residue protein sequence, read N- to C-terminus: Mitogen-activated protein kinase kinae MST7 (415 aa).

The segment at 1–37 (MADPFAPRTMKRRNVKGLALTPAAPKPPPTAENAPIH) is disordered. The region spanning 61–326 (LEVIKDLGSG…EELFERDPFV (266 aa)) is the Protein kinase domain. Residues 67–75 (LGSGNGGTV) and lysine 90 each bind ATP. Positions 363–409 (DLLRSSDSPTATYHGDDRPLETPTSAYRVDPRRGPAEGSAGLADQVD) are disordered.

It belongs to the protein kinase superfamily. STE Ser/Thr protein kinase family. MAP kinase kinase subfamily. Homodimer. Interacts with the adapter protein MST50. Interacts with TRX2.

It catalyses the reaction L-seryl-[protein] + ATP = O-phospho-L-seryl-[protein] + ADP + H(+). The catalysed reaction is L-threonyl-[protein] + ATP = O-phospho-L-threonyl-[protein] + ADP + H(+). In terms of biological role, mitogen-activated protein kinase kinase; part of the MST11-MST7-PMK1 MAP kinase (MAPK) cascade that is essential for appressorium formation, penetration and invasive growth. The MST11-MST7-PMK1 MAP kinase cascade transduces signals from the cell surface sensors MDB2 and SHO1 that recognize various surface signals such as surface hydrophobicity, cutin monomers, and rice leaf waxes. MST7 acts as the upstream MAPKK that directly phosphorylates MAP kinase PMK1. This Pyricularia oryzae (strain 70-15 / ATCC MYA-4617 / FGSC 8958) (Rice blast fungus) protein is Mitogen-activated protein kinase kinae MST7.